Here is a 403-residue protein sequence, read N- to C-terminus: D-alanyl-D-alanine carboxypeptidase DacA (403 aa).

The first 29 residues, 1 to 29, serve as a signal peptide directing secretion; it reads MNTIFSARIMKRLALTTALCTAFISAAHA. Ser73 functions as the Acyl-ester intermediate in the catalytic mechanism. Lys76 acts as the Proton acceptor in catalysis. Ser139 is a catalytic residue. Lys242 is a substrate binding site.

This sequence belongs to the peptidase S11 family.

Its subcellular location is the cell inner membrane. It carries out the reaction Preferential cleavage: (Ac)2-L-Lys-D-Ala-|-D-Ala. Also transpeptidation of peptidyl-alanyl moieties that are N-acyl substituents of D-alanine.. It functions in the pathway cell wall biogenesis; peptidoglycan biosynthesis. Removes C-terminal D-alanyl residues from sugar-peptide cell wall precursors. In Escherichia coli O157:H7, this protein is D-alanyl-D-alanine carboxypeptidase DacA (dacA).